Reading from the N-terminus, the 254-residue chain is Probable phosphatase Sbal223_2880 (254 aa).

Zn(2+) is bound by residues His8, His10, His16, His41, Glu74, His102, His132, Asp193, and His195.

It belongs to the PHP family. It depends on Zn(2+) as a cofactor.

The sequence is that of Probable phosphatase Sbal223_2880 from Shewanella baltica (strain OS223).